Reading from the N-terminus, the 286-residue chain is Energy-coupling factor transporter ATP-binding protein EcfA2 (286 aa).

Residues 3–244 (IKVENVSFIY…AERLEKIGLS (242 aa)) enclose the ABC transporter domain. ATP is bound at residue 40-47 (GHTGSGKS).

The protein belongs to the ABC transporter superfamily. Energy-coupling factor EcfA family. Forms a stable energy-coupling factor (ECF) transporter complex composed of 2 membrane-embedded substrate-binding proteins (S component), 2 ATP-binding proteins (A component) and 2 transmembrane proteins (T component).

The protein resides in the cell membrane. ATP-binding (A) component of a common energy-coupling factor (ECF) ABC-transporter complex. Unlike classic ABC transporters this ECF transporter provides the energy necessary to transport a number of different substrates. This is Energy-coupling factor transporter ATP-binding protein EcfA2 from Caldanaerobacter subterraneus subsp. tengcongensis (strain DSM 15242 / JCM 11007 / NBRC 100824 / MB4) (Thermoanaerobacter tengcongensis).